Consider the following 2542-residue polypeptide: Highly reducing polyketide synthase (2542 aa).

The 429-residue stretch at 7 to 435 (PEPIAIVGMA…GANAHAILDA (429 aa)) folds into the Ketosynthase family 3 (KS3) domain. Active-site for beta-ketoacyl synthase activity residues include Cys-182, His-317, and His-357. Residues 545–872 (FVFTGQGAQW…NLVGSLFLSG (328 aa)) enclose the Malonyl-CoA:ACP transacylase (MAT) domain. An N-terminal hotdog fold region spans residues 927-1062 (HDLLGSRIPG…TTNETLRINS (136 aa)). The 298-residue stretch at 927–1224 (HDLLGSRIPG…FLSLETATKE (298 aa)) folds into the PKS/mFAS DH domain. Catalysis depends on His-959, which acts as the Proton acceptor; for dehydratase activity. Residues 1072–1224 (NKDSYVRRWY…FLSLETATKE (153 aa)) form a C-terminal hotdog fold region. The active-site Proton donor; for dehydratase activity is the Asp-1137. A methyltransferase (CMet) domain region spans residues 1275-1574 (LTQLAIRSVV…AGADIMLDDY (300 aa)). The tract at residues 1606-1634 (VNGTNGINSTNSVNVTNDTSGINDTNRMN) is disordered. Positions 1866–2186 (GKANSFYFES…QGDSVGSVVL (321 aa)) constitute an Enoyl reductase (ER) domain. Positions 2209 to 2389 (ASYLLVGCLG…QAMSMALGMI (181 aa)) constitute a Ketoreductase (KR) domain.

Pantetheine 4'-phosphate is required as a cofactor.

Its pathway is antifungal biosynthesis. Its function is as follows. Highly reducing polyketide synthase; part of the gene cluster that mediates the biosynthesis of the tetrahydropyranyl antifungal agent lanomycin that acts as an inhibitor of CYP51 and blocks the ergosterol biosynthesis. The biosynthesis probably begins with the formation of an hexaketide, followed by methionine mediated alkylation of C-2 and C-6, and methylation of the reduced C-3 oxygen, pyran forming reductive ring closure, oxygenation of C-4, beta-keto reduction, enoyl reduction and dehydration of the remaining oxygens, and finally, acylation with glycine to complete the biosynthesis. This chain is Highly reducing polyketide synthase, found in Pyrenophora dematioidea (Helminthosporium dematioideum).